The following is a 45-amino-acid chain: Photosystem II reaction center protein K (45 aa).

The propeptide occupies 1 to 8 (MEAVFLLA). A helical membrane pass occupies residues 24–44 (LPVIPVFFLALAFVWQAAVGF).

It belongs to the PsbK family. PSII is composed of 1 copy each of membrane proteins PsbA, PsbB, PsbC, PsbD, PsbE, PsbF, PsbH, PsbI, PsbJ, PsbK, PsbL, PsbM, PsbT, PsbX, PsbY, PsbZ, Psb30/Ycf12, peripheral proteins PsbO, CyanoQ (PsbQ), PsbU, PsbV and a large number of cofactors. It forms dimeric complexes.

It is found in the cellular thylakoid membrane. Its function is as follows. One of the components of the core complex of photosystem II (PSII). PSII is a light-driven water:plastoquinone oxidoreductase that uses light energy to abstract electrons from H(2)O, generating O(2) and a proton gradient subsequently used for ATP formation. It consists of a core antenna complex that captures photons, and an electron transfer chain that converts photonic excitation into a charge separation. This Crocosphaera subtropica (strain ATCC 51142 / BH68) (Cyanothece sp. (strain ATCC 51142)) protein is Photosystem II reaction center protein K.